The sequence spans 1996 residues: Protein Shroom3 (1996 aa).

In terms of domain architecture, PDZ spans 25 to 110; sequence YIYLEAFLEG…TLRLVVRRDV (86 aa). Residues 150–173 are disordered; the sequence is KHRRSEPAGRPHSWHTTKSGEKQP. Ser-213 is subject to Phosphoserine. Disordered stretches follow at residues 340 to 389, 437 to 468, 568 to 629, 673 to 772, and 788 to 1053; these read NGQG…PARS, EKSP…TSIY, DASL…WEGD, RRHS…LQGF, and FEQR…PESS. 2 positions are modified to phosphoserine: Ser-439 and Ser-443. The segment covering 700-718 has biased composition (basic and acidic residues); sequence KAEDPGRKAAPDLGSHLDR. Low complexity predominate over residues 750 to 768; that stretch reads HPHTSSLGRRGPGPGSASA. The span at 814 to 823 shows a compositional bias: polar residues; the sequence is TVSTSSTSGN. Ser-816 is subject to Phosphoserine. Composition is skewed to basic and acidic residues over residues 826-836 and 846-859; these read EETKAHIRFSE and QHFK…EEAS. 2 stretches are compositionally biased toward polar residues: residues 862–871 and 887–896; these read PCGQQLSGGA and RSQSTFQLSS. Residue Ser-890 is modified to Phosphoserine. Over residues 897–909 the composition is skewed to basic and acidic residues; sequence EPEREPEWRDRPG. Ser-910 and Ser-913 each carry phosphoserine. An ASD1 domain is found at 928 to 1030; that stretch reads IKDAQSRVLG…SEPEKMNEVG (103 aa). A compositionally biased stretch (low complexity) spans 950–964; the sequence is APVASRSWRPRPSSA. The residue at position 970 (Ser-970) is a Phosphoserine. Positions 1011–1027 are enriched in basic and acidic residues; it reads LTPEQKKRSYSEPEKMN. Phosphoserine occurs at positions 1069 and 1072. Disordered regions lie at residues 1093–1115, 1137–1223, 1315–1573, and 1627–1665; these read KTGK…LRER, SSLS…MSAE, ECPG…SFNK, and SLGG…SSED. Low complexity predominate over residues 1137-1148; that stretch reads SSLSSLREPSLQ. Ser-1221 bears the Phosphoserine mark. The segment covering 1366 to 1375 has biased composition (polar residues); the sequence is YCSQDGQTGR. The segment covering 1403–1417 has biased composition (basic and acidic residues); the sequence is CEGDGPEHGVEEGTR. A Phosphoserine modification is found at Ser-1441. Residues 1459 to 1472 are compositionally biased toward polar residues; that stretch reads KQQSLPSLCSTSDP. Residues 1498-1515 show a composition bias toward basic and acidic residues; that stretch reads PPPHEDYEDEVFVRDPHP. A compositionally biased stretch (pro residues) spans 1524–1536; it reads EPLPPPPPPPPSQ. Positions 1634–1649 are enriched in polar residues; that stretch reads PIQTQSLSHDPVSGTQ. A compositionally biased stretch (basic and acidic residues) spans 1651-1665; the sequence is LEKKVSPDPQKSSED. The ASD2 domain maps to 1669–1957; it reads EALAKEIVHQ…QVKCLLESLP (289 aa).

This sequence belongs to the shroom family. Interacts with F-actin. Interacts with ROCK1.

The protein resides in the cell junction. Its subcellular location is the adherens junction. The protein localises to the cytoplasm. It is found in the cytoskeleton. It localises to the apical cell membrane. Functionally, controls cell shape changes in the neuroepithelium during neural tube closure. Induces apical constriction in epithelial cells by promoting the apical accumulation of F-actin and myosin II, and probably by bundling stress fibers. Induces apicobasal cell elongation by redistributing gamma-tubulin and directing the assembly of robust apicobasal microtubule arrays. This chain is Protein Shroom3 (SHROOM3), found in Homo sapiens (Human).